A 276-amino-acid chain; its full sequence is uncharacterized protein (276 aa).

The AB hydrolase-1 domain maps to 20 to 137 (PVLIFIPGAN…PPINTFLPDS (118 aa)). The tract at residues 57-76 (GESELTEPLPDSASNPDSDY) is disordered.

Belongs to the AB hydrolase superfamily.

This is an uncharacterized protein from Staphylococcus aureus (strain COL).